Here is a 507-residue protein sequence, read N- to C-terminus: Phosphoprotein (507 aa).

An interaction with N0 region spans residues 1–48; the sequence is MAEEQARHVKNGLECIRALKAEPIGSLAIEEAMAAWSEISDNPGQERA. 5 disordered regions span residues 40 to 100, 134 to 163, 201 to 232, 250 to 273, and 285 to 309; these read SDNP…PRNL, GLDGDSTLSGGDNESENSDVDIGEPDTEGY, NNFPKLGKTLNVPPPPDPGRASTSGTPIKKGT, GATQCARKSPSEPSGPGAPAGNVP, and WTPESGTTISPRSQNNEEGGDHYDD. S86 bears the Phosphoserine mark. Over residues 134-145 the composition is skewed to low complexity; it reads GLDGDSTLSGGD. The span at 146 to 160 shows a compositional bias: acidic residues; sequence NESENSDVDIGEPDT. Residue S151 is modified to Phosphoserine. Positions 260-270 are enriched in low complexity; the sequence is SEPSGPGAPAG. Residues 286-301 are compositionally biased toward polar residues; that stretch reads TPESGTTISPRSQNNE. The segment at 304 to 376 is multimerization; the sequence is GDHYDDELFS…LSSIMIAIPG (73 aa). D314 contacts Ca(2+). Interaction with the L polymerase stretches follow at residues 361–377 and 396–410; these read STLEGHLSSIMIAIPGL and PIIGRDSGRALAEVL. The tract at residues 457–507 is x domain (XD); the sequence is GPASRSVIRSIIKSSRLEEDRKRYLMTLLDDIKGANDLAKFHQMLMKIIMK. Positions 459–507 are interaction with the nucleocapsid (N-RNA); sequence ASRSVIRSIIKSSRLEEDRKRYLMTLLDDIKGANDLAKFHQMLMKIIMK.

The protein belongs to the morbillivirus P protein family. As to quaternary structure, homotetramer. Interacts (via multimerization domain and XD domain) with polymerase L; this interaction forms the polymerase L-P complex. Interacts (via N-terminus) with N0 (via Ncore); this interaction allows P to chaperon N0 to avoid N polymerization and non-specific RNA binding before encapsidation. Interacts (via C-terminus) with N-RNA template (via Ntail); this interaction maintains the P/L complex anchored to the nucleocapsid template during the sequential transcription. Interacts (via C-terminus) with protein C this interaction allows C to associate with the ribonucleocapsid. In terms of processing, phosphorylation on serines by host CK2 is necessary for the formation of viral factories.

Functionally, essential cofactor of the RNA polymerase L that plays a central role in the transcription and replication by forming the polymerase complex with RNA polymerase L and recruiting L to the genomic N-RNA template for RNA synthesis. Also plays a central role in the encapsidation of nascent RNA chains by forming the encapsidation complex with the nucleocapsid protein N (N-P complex). Acts as a chaperone for newly synthesized free N protein, so-called N0, allowing encapsidation of nascent RNA chains during replication. The nucleoprotein protein N prevents excessive phosphorylation of P, which leads to down-regulation of viral transcription/ replication. Participates, together with N, in the formation of viral factories (viroplasms), which are large inclusions in the host cytoplasm where replication takes place. The chain is Phosphoprotein (P/V) from Measles virus (strain Edmonston B) (MeV).